The sequence spans 322 residues: CRISPR-associated endonuclease Cas1 (322 aa).

The Mn(2+) site is built by glutamate 149, histidine 214, and glutamate 229.

It belongs to the CRISPR-associated endonuclease Cas1 family. Homodimer, forms a heterotetramer with a Cas2 homodimer. Requires Mg(2+) as cofactor. Mn(2+) serves as cofactor.

Functionally, CRISPR (clustered regularly interspaced short palindromic repeat), is an adaptive immune system that provides protection against mobile genetic elements (viruses, transposable elements and conjugative plasmids). CRISPR clusters contain spacers, sequences complementary to antecedent mobile elements, and target invading nucleic acids. CRISPR clusters are transcribed and processed into CRISPR RNA (crRNA). Acts as a dsDNA endonuclease. Involved in the integration of spacer DNA into the CRISPR cassette. The sequence is that of CRISPR-associated endonuclease Cas1 from Pyrococcus horikoshii (strain ATCC 700860 / DSM 12428 / JCM 9974 / NBRC 100139 / OT-3).